A 667-amino-acid polypeptide reads, in one-letter code: Cylicin-1 (667 aa).

Disordered stretches follow at residues 121 to 251 and 275 to 634; these read PYTH…SSNV and SQNN…ILPS. A compositionally biased stretch (basic and acidic residues) spans 129–172; sequence KKAESKKYKDDKKETALKKISKKDTGPHEVDEKPKRRNKADKTP. Over residues 173–182 the composition is skewed to low complexity; sequence SKSSHGSQLS. The segment covering 187–197 has biased composition (basic and acidic residues); the sequence is SKSETNPESKD. The span at 223-237 shows a compositional bias: low complexity; it reads STSTKKYSKSSKNNS. The segment covering 238 to 251 has biased composition (polar residues); it reads DAVSETCSKNSSNV. Basic and acidic residues-rich tracts occupy residues 284-326, 345-371, 380-394, 417-431, 438-464, 483-506, 521-533, 549-558, and 583-593; these read KKDA…KDTE, SKKD…DAKK, SKKD…KDAE, GDSK…KDAV, SKKD…KEST, SKKD…KKAT, KKTEMFKSSD, and DSKKDAVEPKR. Repeat copies occupy residues 287-305, 306-337, 338-368, 369-405, 406-442, 443-475, 476-516, 517-547, and 548-569. A 9 X approximate tandem repeats region spans residues 287 to 569; that stretch reads AKKDAKGKGS…ESEESLFKPG (283 aa). Positions 624 to 633 are enriched in pro residues; sequence PLPPCEPILP.

In terms of assembly, interacts with proteins of spermatozoa head including ACTL7A, CCIN, FAM209A and SPACA1; the interactions may be necessary for proper acrosome attachment to the nuclear envelope. As to expression, testis.

The protein resides in the cytoplasm. The protein localises to the cytoskeleton. It localises to the perinuclear theca. It is found in the calyx. Functionally, plays a role in the establishment of normal sperm morphology during spermatogenesis and is required for acrosome attachment to the nuclear envelope. This is Cylicin-1 (CYLC1) from Bos taurus (Bovine).